Here is a 1216-residue protein sequence, read N- to C-terminus: DNA polymerase subunit gamma-1 (1216 aa).

The span at 27-37 (SSSVLDPVPSD) shows a compositional bias: low complexity. The segment at 27–50 (SSSVLDPVPSDGQPQSQMPSSENG) is disordered. Residues 38–50 (GQPQSQMPSSENG) show a composition bias toward polar residues. The Exo I signature appears at 179-183 (VFDVE). Asp-181 functions as the Exonuclease activity in the catalytic mechanism. An Exo II motif is present at residues 250 to 258 (VGHNVSFDR). Ser-289 provides a ligand contact to DNA. A compositionally biased stretch (basic residues) spans 301-314 (GKHKTQHPTKRGQK). The tract at residues 301 to 321 (GKHKTQHPTKRGQKSQKNANG) is disordered. Residues 377–385 (YCARDVWAT) carry the Exo III motif. The segment at 488–518 (TASASKLPIEGAGPFGDPMDQEDPGPPSEEE) is disordered. Positions 491 to 552 (ASKLPIEGAG…RPQHLPGHPG (62 aa)) are accessory-interacting determinant. Over residues 506-518 (MDQEDPGPPSEEE) the composition is skewed to acidic residues. Position 560 (Arg-560) interacts with RNA. Residue Ser-574 coordinates DNA. RNA-binding residues include His-731, Gly-740, and Lys-745. DNA is bound by residues Lys-783 and Thr-826. Residues 835–841 (TWLTASN) are trigger loop. RNA contacts are provided by Ser-840 and Arg-846. Residues 864–873 (VGADVDSQEL) carry the Pol A motif. Residues Asp-867, Val-868, Ser-870, Glu-872, Arg-920, Lys-924, and Tyr-928 each contribute to the a 2'-deoxyribonucleoside 5'-triphosphate site. Residues Asp-867 and Val-868 each coordinate Mg(2+). Residues 920–935 (REHAKVFNYGRIYGAG) carry the Pol B motif. The DNA site is built by Thr-1071 and Ser-1072. Positions 1111–1118 (HDEVRYLV) match the Pol C motif. A 2'-deoxyribonucleoside 5'-triphosphate is bound at residue Asp-1112. Asp-1112 contacts Mg(2+).

The protein belongs to the DNA polymerase type-A family. As to quaternary structure, heterotrimer composed of a catalytic subunit and a homodimer of accessory subunits (POLG:POLG2). Interacts with TTC3. Interacts with LIG3. Requires Mg(2+) as cofactor.

The protein localises to the mitochondrion. The protein resides in the mitochondrion matrix. It localises to the mitochondrion nucleoid. It catalyses the reaction DNA(n) + a 2'-deoxyribonucleoside 5'-triphosphate = DNA(n+1) + diphosphate. The enzyme catalyses a 3'-end 2'-deoxyribonucleotidyl-deoxyribonucleotide-DNA + H2O = a 3'-end 2'-deoxyribonucleotide-DNA + a 2'-deoxyribonucleoside 5'-phosphate + H(+). It carries out the reaction a 5'-end 2'-deoxyribose-2'-deoxyribonucleotide-DNA = (2E,4S)-4-hydroxypenten-2-al-5-phosphate + a 5'-end 5'-phospho-2'-deoxyribonucleoside-DNA + H(+). With respect to regulation, inhibited by dideoxynucleotides such as antiviral agent zalcitabine. Functionally, catalytic subunit of DNA polymerase gamma solely responsible for replication of mitochondrial DNA (mtDNA). Replicates both heavy and light strands of the circular mtDNA genome using a single-stranded DNA template, RNA primers and the four deoxyribonucleoside triphosphates as substrates. Has 5' -&gt; 3' polymerase activity. Functionally interacts with TWNK and SSBP1 at the replication fork to form a highly processive replisome, where TWNK unwinds the double-stranded DNA template prior to replication and SSBP1 covers the parental heavy strand to enable continuous replication of the entire mitochondrial genome. A single nucleotide incorporation cycle includes binding of the incoming nucleotide at the insertion site, a phosphodiester bond formation reaction that extends the 3'-end of the primer DNA, and translocation of the primer terminus to the post-insertion site. After completing replication of a mtDNA strand, mediates 3' -&gt; 5' exonucleolytic degradation at the nick to enable proper ligation. Highly accurate due to high nucleotide selectivity and 3' -&gt; 5' exonucleolytic proofreading. Proficiently corrects base substitutions, single-base additions and deletions in non-repetitive sequences and short repeats, but displays lower proofreading activity when replicating longer homopolymeric stretches. Exerts exonuclease activity toward single-stranded DNA and double-stranded DNA containing 3'-terminal mispairs. When a misincorporation occurs, transitions from replication to a pro-nucleolytic editing mode and removes the missincorporated nucleoside in the exonuclease active site. Proceeds via an SN2 nucleolytic mechanism in which Asp-198 catalyzes phosphodiester bond hydrolysis and Glu-200 stabilizes the leaving group. As a result the primer strand becomes one nucleotide shorter and is positioned in the post-insertion site, ready to resume DNA synthesis. Exerts 5'-deoxyribose phosphate (dRP) lyase activity and mediates repair-associated mtDNA synthesis (gap filling) in base-excision repair pathway. Catalyzes the release of the 5'-terminal 2-deoxyribose-5-phosphate sugar moiety from incised apurinic/apyrimidinic (AP) sites to produce a substrate for DNA ligase. The dRP lyase reaction does not require divalent metal ions and likely proceeds via a Schiff base intermediate in a beta-elimination reaction mechanism. This chain is DNA polymerase subunit gamma-1, found in Rattus norvegicus (Rat).